The chain runs to 137 residues: ATP synthase epsilon chain (137 aa).

This sequence belongs to the ATPase epsilon chain family. F-type ATPases have 2 components, CF(1) - the catalytic core - and CF(0) - the membrane proton channel. CF(1) has five subunits: alpha(3), beta(3), gamma(1), delta(1), epsilon(1). CF(0) has three main subunits: a, b and c.

The protein localises to the cellular thylakoid membrane. Produces ATP from ADP in the presence of a proton gradient across the membrane. This Nostoc sp. (strain PCC 7120 / SAG 25.82 / UTEX 2576) protein is ATP synthase epsilon chain (atpC).